The primary structure comprises 301 residues: NADH-cytochrome b5 reductase 3 (301 aa).

G2 is lipidated: N-myristoyl glycine. Residues 40–152 (DIKYPLRLID…RGPSGLLVYQ (113 aa)) enclose the FAD-binding FR-type domain. N6-acetyllysine is present on K42. A Phosphotyrosine modification is found at Y43. Residues R92, P93, Y94, V109, K111, and F114 each contribute to the FAD site. K120 is modified (N6-acetyllysine). K126, M127, S128, and T185 together coordinate FAD.

This sequence belongs to the flavoprotein pyridine nucleotide cytochrome reductase family. In terms of assembly, component of a complex composed of cytochrome b5, NADH-cytochrome b5 reductase (CYB5R3) and MTARC2. Interacts with MTLN; the interaction is required to maintain cellular lipid composition and leads to stimulation of mitochondrial respiratory complex I activity. FAD is required as a cofactor. Expressed at late stages of erythroid maturation.

It is found in the endoplasmic reticulum membrane. The protein resides in the mitochondrion outer membrane. It localises to the cytoplasm. It carries out the reaction 2 Fe(III)-[cytochrome b5] + NADH = 2 Fe(II)-[cytochrome b5] + NAD(+) + H(+). Catalyzes the reduction of two molecules of cytochrome b5 using NADH as the electron donor. This chain is NADH-cytochrome b5 reductase 3, found in Homo sapiens (Human).